Here is a 148-residue protein sequence, read N- to C-terminus: Nucleoside diphosphate kinase B (148 aa).

Positions 9, 57, 85, 91, 102, and 112 each coordinate ATP. H115 acts as the Pros-phosphohistidine intermediate in catalysis.

It belongs to the NDK family. Mg(2+) serves as cofactor.

The catalysed reaction is a 2'-deoxyribonucleoside 5'-diphosphate + ATP = a 2'-deoxyribonucleoside 5'-triphosphate + ADP. It catalyses the reaction a ribonucleoside 5'-diphosphate + ATP = a ribonucleoside 5'-triphosphate + ADP. Functionally, major role in the synthesis of nucleoside triphosphates other than ATP. The ATP gamma phosphate is transferred to the NDP beta phosphate via a ping-pong mechanism, using a phosphorylated active-site intermediate. This chain is Nucleoside diphosphate kinase B, found in Flaveria bidentis (Coastal plain yellowtops).